The sequence spans 206 residues: MKNSPTVEKLIESFTLLPGVGKKTAERYTFFLINQKNKNKILYLSKHLKELVNNIKSCNICGYITEKNICNFCSDSQRDHSTIMIVADNRDVYCFEKINHYHGLYHILGGLIDFSRCIKPENLNFNSLKDRLKTIKEIIIATNSTLEGEITATYSKKFLKKYLKDEKIKITKLAYGIPIGLDFNYLDEKTLCNAINNRNNFKGENE.

The C4-type zinc finger occupies Cys-58–Cys-73. In terms of domain architecture, Toprim spans Ser-81 to Pro-178.

It belongs to the RecR family.

Functionally, may play a role in DNA repair. It seems to be involved in an RecBC-independent recombinational process of DNA repair. It may act with RecF and RecO. This chain is Recombination protein RecR, found in Phytoplasma mali (strain AT).